A 438-amino-acid chain; its full sequence is Xylose isomerase (438 aa).

Active-site residues include His103 and Asp106. Mg(2+) is bound by residues Glu234, Glu270, His273, Asp298, Asp309, Asp311, and Asp341.

This sequence belongs to the xylose isomerase family. Homotetramer. Mg(2+) is required as a cofactor.

It is found in the cytoplasm. The catalysed reaction is alpha-D-xylose = alpha-D-xylulofuranose. In Phocaeicola vulgatus (strain ATCC 8482 / DSM 1447 / JCM 5826 / CCUG 4940 / NBRC 14291 / NCTC 11154) (Bacteroides vulgatus), this protein is Xylose isomerase.